We begin with the raw amino-acid sequence, 687 residues long: Transketolase 2 (687 aa).

His-47 contacts substrate. Residues His-87 and 135–137 (GPL) each bind thiamine diphosphate. Asp-176 lines the Mg(2+) pocket. Thiamine diphosphate contacts are provided by Gly-177 and Asn-206. 2 residues coordinate Mg(2+): Asn-206 and Ile-208. His-282, Arg-379, and Ser-406 together coordinate substrate. His-282 is a binding site for thiamine diphosphate. Residue Glu-432 is the Proton donor of the active site. Phe-458 serves as a coordination point for thiamine diphosphate. His-482, Asp-490, His-494, and Arg-541 together coordinate substrate.

Belongs to the transketolase family. Mg(2+) is required as a cofactor. Thiamine diphosphate serves as cofactor.

The catalysed reaction is D-sedoheptulose 7-phosphate + D-glyceraldehyde 3-phosphate = aldehydo-D-ribose 5-phosphate + D-xylulose 5-phosphate. With respect to regulation, activity is increased sixfold following autotrophic growth on methanol compared with that of heterotrophically grown cells. Catalyzes the transfer of a two-carbon ketol group from a ketose donor to an aldose acceptor, via a covalent intermediate with the cofactor thiamine pyrophosphate. The sequence is that of Transketolase 2 from Xanthobacter flavus.